The following is a 169-amino-acid chain: EP300-interacting inhibitor of differentiation 1 (169 aa).

The tract at residues 31-50 is disordered; it reads GRGARGPAPEEGPMEEEAGP. The tract at residues 54–120 is interaction with NR0B2; it reads RAQRGLFPEA…AGDALDGGFQ (67 aa). The LXCXE motif motif lies at 150-154; it reads LGCDE.

In terms of assembly, interacts via its LXCXE motif with the entire pocket region of RB1. Interacts with EP300, NR0B2 and TRIM27. As to expression, expressed in all adult tissues examined and during embryogenesis.

It is found in the nucleus. The protein resides in the cytoplasm. In terms of biological role, interacts with RB1 and EP300 and acts as a repressor of MYOD1 transactivation. Inhibits EP300 and CBP histone acetyltransferase activity. May be involved in coupling cell cycle exit to the transcriptional activation of genes required for cellular differentiation. May act as a candidate coinhibitory factor for NR0B2 that can be directly linked to transcription inhibitory mechanisms. The chain is EP300-interacting inhibitor of differentiation 1 from Mus musculus (Mouse).